Reading from the N-terminus, the 765-residue chain is 5-methyltetrahydropteroyltriglutamate--homocysteine methyltransferase 1 (765 aa).

2 residues coordinate 5-methyltetrahydropteroyltri-L-glutamate: Lys18 and Asn116. Ile437–Ser439 is a binding site for L-homocysteine. Residues Ile437 to Ser439 and Glu490 each bind L-methionine. 5-methyltetrahydropteroyltri-L-glutamate is bound by residues Arg521–Cys522 and Trp567. Asp605 is an L-homocysteine binding site. L-methionine is bound at residue Asp605. Residues His647, Cys649, His658, Asp662, and Glu671 each contribute to the Zn(2+) site. Residue His701 is the Proton donor of the active site. Cys733 serves as a coordination point for Zn(2+).

Belongs to the vitamin-B12 independent methionine synthase family. Requires Zn(2+) as cofactor. In terms of tissue distribution, expressed in leaves, stems, flowers, siliques and seeds.

Its subcellular location is the cytoplasm. The protein resides in the cytosol. It carries out the reaction 5-methyltetrahydropteroyltri-L-glutamate + L-homocysteine = tetrahydropteroyltri-L-glutamate + L-methionine. The protein operates within amino-acid biosynthesis; L-methionine biosynthesis via de novo pathway; L-methionine from L-homocysteine (MetE route): step 1/1. Catalyzes the transfer of a methyl group from 5-methyltetrahydrofolate to homocysteine resulting in methionine formation. This Arabidopsis thaliana (Mouse-ear cress) protein is 5-methyltetrahydropteroyltriglutamate--homocysteine methyltransferase 1 (MS1).